Consider the following 281-residue polypeptide: sn-glycerol-3-phosphate transport system permease protein UgpE (281 aa).

The next 6 membrane-spanning stretches (helical) occupy residues 16–36 (LILG…AATL), 85–105 (FSIT…IVWF), 113–133 (FFWM…FPTV), 142–162 (LDSY…TFLF), 202–222 (ALFV…LLII), and 247–267 (WNSV…IVLV). Residues 77-268 (LLNSFVMAFS…IPPVVIVLVM (192 aa)) form the ABC transmembrane type-1 domain.

Belongs to the binding-protein-dependent transport system permease family. UgpAE subfamily. The complex is composed of two ATP-binding proteins (UgpC), two transmembrane proteins (UgpA and UgpE) and a solute-binding protein (UgpB).

It is found in the cell inner membrane. Part of the ABC transporter complex UgpBAEC involved in sn-glycerol-3-phosphate (G3P) import. Probably responsible for the translocation of the substrate across the membrane. The protein is sn-glycerol-3-phosphate transport system permease protein UgpE (ugpE) of Shigella dysenteriae serotype 1 (strain Sd197).